The following is a 932-amino-acid chain: Protocadherin gamma-A2 (932 aa).

The signal sequence occupies residues 1 to 28 (MAALQKLPHCRKLFLLCFLLATLWEARA). 6 consecutive Cadherin domains span residues 29–133 (GQIR…APRF), 134–242 (GVEE…APVF), 243–347 (TQPE…APEF), 348–452 (YMTS…APAF), 453–562 (SRTS…PPEI), and 570–682 (DGST…EPSA). Topologically, residues 29 to 692 (GQIRYSVREE…KPNDSDLTLY (664 aa)) are extracellular. N-linked (GlcNAc...) asparagine glycans are attached at residues asparagine 419 and asparagine 545. N-linked (GlcNAc...) asparagine glycosylation occurs at asparagine 685. Residues 693–713 (LVVAVAAVSCVFLAFVIVLLA) form a helical membrane-spanning segment. Over 714 to 932 (HRLRRWHKSR…KKKSGKKEKK (219 aa)) the chain is Cytoplasmic. 2 disordered regions span residues 798–841 (LEEE…WPNN) and 902–932 (ATLT…KEKK). Residues 806-841 (FSQQAPPNTDWRFSQAQRPGTSGSQNGDDTGTWPNN) show a composition bias toward polar residues. Residues 922 to 932 (NKKKSGKKEKK) are compositionally biased toward basic residues.

Its subcellular location is the cell membrane. In terms of biological role, potential calcium-dependent cell-adhesion protein. May be involved in the establishment and maintenance of specific neuronal connections in the brain. The chain is Protocadherin gamma-A2 (PCDHGA2) from Pan troglodytes (Chimpanzee).